A 342-amino-acid chain; its full sequence is Ankyrin repeat domain-containing protein 2A (342 aa).

A disordered region spans residues 1–41 (MASNSEKNPLLSDEKPKSTEENKSSKPESASGSSTSSAMPG). The span at 12–26 (SDEKPKSTEENKSSK) shows a compositional bias: basic and acidic residues. Positions 27–37 (PESASGSSTSS) are enriched in low complexity. ANK repeat units lie at residues 217 to 246 (EEES…NKDE), 250 to 279 (EGRT…SVNA), 283 to 312 (NKNT…AVTL), and 316 to 342 (DEKT…DAFL). Residues H223 and E246 each contribute to the a 1,2-diacyl-3-O-(beta-D-galactosyl)-sn-glycerol site. Y294 and R296 together coordinate a 1,2-diacyl-sn-glycero-3-phospho-(1'-sn-glycerol).

As to quaternary structure, interacts with TOM20-4, CYTB5-E, CBR1, APX3, APX5, TOC34 and GRF6. Binds to chloroplast outer envelope membrane (OEM) protein targeting signals, as well as to chloroplasts. Interacts with OEP7. Binds to HSP17.8 via its ankyrin repeats, this interaction enhances chaperone activity and chloroplast binding. Also interacts with HSP17.4A, HSP17.6A and HSP18.1. Binds specifically to two chloroplast glycolipids, monogalactosyldiacylglycerol (MGDG) and phosphatidylglycerol (PG). As to expression, ubiquitously expressed at basal level.

Its subcellular location is the cytoplasm. It is found in the nucleus. The protein localises to the plastid. It localises to the chloroplast outer membrane. In terms of biological role, exhibits chaperone activity toward chloroplast outer envelope membrane, mitochondrion outer membrane, endoplasmic reticulum membrane and peroxisomal proteins, by recruiting specific proteins containing a single transmembrane associated with an AKR2A-binding sequence (ABS) and subsequently binding glycolipids (e.g. monogalactosyldiacylglycerol (MGDG) and phosphatidylglycerol (PG)) present in the membrane of the target organelle. Seems to be involved in the regulation of hydrogen peroxide levels during biotic and abiotic stresses by optimizing the ascorbate peroxidase 3 (APX3) hydrogen peroxide-degrading activity. This regulation might be monitored by GRF6. Cytosolic targeting factor for chloroplast outer membrane (COM) proteins that mediates sorting and targeting of nascent chloroplast outer envelope membrane (OEM) proteins to the chloroplast. Facilitates the targeting of OEP7 to chloroplasts. Facilitates the targeting of APX3 to peroxisomes. Involved in cellular metabolism (e.g. peroxisome activity) and required for plant growth and development. In Arabidopsis thaliana (Mouse-ear cress), this protein is Ankyrin repeat domain-containing protein 2A.